A 563-amino-acid polypeptide reads, in one-letter code: Arginine--tRNA ligase (563 aa).

The 'HIGH' region motif lies at 137–147 (ANPTGLLHMGN).

The protein belongs to the class-I aminoacyl-tRNA synthetase family. As to quaternary structure, monomer.

It is found in the cytoplasm. The catalysed reaction is tRNA(Arg) + L-arginine + ATP = L-arginyl-tRNA(Arg) + AMP + diphosphate. This chain is Arginine--tRNA ligase, found in Desulforudis audaxviator (strain MP104C).